A 234-amino-acid chain; its full sequence is Sugar fermentation stimulation protein homolog (234 aa).

This sequence belongs to the SfsA family.

The chain is Sugar fermentation stimulation protein homolog from Shewanella baltica (strain OS223).